The chain runs to 107 residues: UPF0060 membrane protein RPD_3084 (107 aa).

4 helical membrane-spanning segments follow: residues 5–25 (IIYVCAALAEIAGCFAFWGWL), 31–51 (VWWLLPGMLSLAAFAYLLTLV), 59–79 (AYASYGGIYIVASLVWLWSVE), and 85–105 (RWDVTGGCVCLIGAAIILWGP).

Belongs to the UPF0060 family.

It is found in the cell inner membrane. This Rhodopseudomonas palustris (strain BisB5) protein is UPF0060 membrane protein RPD_3084.